Here is a 157-residue protein sequence, read N- to C-terminus: 2-C-methyl-D-erythritol 2,4-cyclodiphosphate synthase (157 aa).

A divalent metal cation is bound by residues aspartate 9 and histidine 11. Residues 9–11 (DVH) and 35–36 (HS) contribute to the 4-CDP-2-C-methyl-D-erythritol 2-phosphate site. Histidine 43 serves as a coordination point for a divalent metal cation. 4-CDP-2-C-methyl-D-erythritol 2-phosphate is bound by residues 57-59 (DIG), 62-66 (FPDTD), 101-107 (AQKPKMA), 133-136 (TTTE), phenylalanine 140, and arginine 143.

The protein belongs to the IspF family. In terms of assembly, homotrimer. A divalent metal cation serves as cofactor.

It carries out the reaction 4-CDP-2-C-methyl-D-erythritol 2-phosphate = 2-C-methyl-D-erythritol 2,4-cyclic diphosphate + CMP. It participates in isoprenoid biosynthesis; isopentenyl diphosphate biosynthesis via DXP pathway; isopentenyl diphosphate from 1-deoxy-D-xylulose 5-phosphate: step 4/6. In terms of biological role, involved in the biosynthesis of isopentenyl diphosphate (IPP) and dimethylallyl diphosphate (DMAPP), two major building blocks of isoprenoid compounds. Catalyzes the conversion of 4-diphosphocytidyl-2-C-methyl-D-erythritol 2-phosphate (CDP-ME2P) to 2-C-methyl-D-erythritol 2,4-cyclodiphosphate (ME-CPP) with a corresponding release of cytidine 5-monophosphate (CMP). The polypeptide is 2-C-methyl-D-erythritol 2,4-cyclodiphosphate synthase (Halalkalibacterium halodurans (strain ATCC BAA-125 / DSM 18197 / FERM 7344 / JCM 9153 / C-125) (Bacillus halodurans)).